Reading from the N-terminus, the 204-residue chain is uncharacterized protein (204 aa).

The segment at 1-20 is disordered; that stretch reads MQNPLPEVMSPEHDKRTTTP.

This is an uncharacterized protein from Frog virus 3 (isolate Goorha) (FV-3).